The following is a 170-amino-acid chain: Peptide deformylase (170 aa).

Cysteine 91 and histidine 133 together coordinate Fe cation. Residue glutamate 134 is part of the active site. Residue histidine 137 coordinates Fe cation.

Belongs to the polypeptide deformylase family. It depends on Fe(2+) as a cofactor.

The enzyme catalyses N-terminal N-formyl-L-methionyl-[peptide] + H2O = N-terminal L-methionyl-[peptide] + formate. Removes the formyl group from the N-terminal Met of newly synthesized proteins. Requires at least a dipeptide for an efficient rate of reaction. N-terminal L-methionine is a prerequisite for activity but the enzyme has broad specificity at other positions. This chain is Peptide deformylase, found in Histophilus somni (strain 129Pt) (Haemophilus somnus).